Consider the following 130-residue polypeptide: MTTLRSAVAKVSETWKMKIAQRSFFEKTIKDFNFNTGYYNQIGLRWHDIMPRNAVVEEAFRRLPREEREDMDFRLARATLLSANKTILSKEEWTKQEEDVPYLDPYIKLIERELRNKADWDNFISPRTYP.

This sequence belongs to the UQCRB/QCR7 family. As to quaternary structure, component of the ubiquinol-cytochrome c oxidoreductase (cytochrome b-c1 complex, complex III, CIII), a multisubunit enzyme composed of 3 respiratory subunits cytochrome b, cytochrome c1 and Rieske protein, 2 core protein subunits, and additional low-molecular weight protein subunits. The complex exists as an obligatory dimer and forms supercomplexes (SCs) in the inner mitochondrial membrane with cytochrome c oxidase (complex IV, CIV).

The protein localises to the mitochondrion inner membrane. Functionally, component of the ubiquinol-cytochrome c oxidoreductase, a multisubunit transmembrane complex that is part of the mitochondrial electron transport chain which drives oxidative phosphorylation. The respiratory chain contains 3 multisubunit complexes succinate dehydrogenase (complex II, CII), ubiquinol-cytochrome c oxidoreductase (cytochrome b-c1 complex, complex III, CIII) and cytochrome c oxidase (complex IV, CIV), that cooperate to transfer electrons derived from NADH and succinate to molecular oxygen, creating an electrochemical gradient over the inner membrane that drives transmembrane transport and the ATP synthase. The cytochrome b-c1 complex catalyzes electron transfer from ubiquinol to cytochrome c, linking this redox reaction to translocation of protons across the mitochondrial inner membrane, with protons being carried across the membrane as hydrogens on the quinol. In the process called Q cycle, 2 protons are consumed from the matrix, 4 protons are released into the intermembrane space and 2 electrons are passed to cytochrome c. In Echinococcus multilocularis (Fox tapeworm), this protein is Cytochrome b-c1 complex subunit 7 (UBCRBP).